Reading from the N-terminus, the 485-residue chain is Ribosomal protein uS12 methylthiotransferase RimO (485 aa).

Residues 37 to 147 enclose the MTTase N-terminal domain; the sequence is SRIGFVSLGC…VVEQVHEHLP (111 aa). [4Fe-4S] cluster contacts are provided by Cys-46, Cys-82, Cys-111, Cys-179, Cys-183, and Cys-186. The 238-residue stretch at 165 to 402 folds into the Radical SAM core domain; the sequence is LTPRHYAYLK…MEVQGEISAA (238 aa). A TRAM domain is found at 405–471; sequence KARIGNEYQV…EHDVWAVLSE (67 aa).

Belongs to the methylthiotransferase family. RimO subfamily. The cofactor is [4Fe-4S] cluster.

It is found in the cytoplasm. It carries out the reaction L-aspartate(89)-[ribosomal protein uS12]-hydrogen + (sulfur carrier)-SH + AH2 + 2 S-adenosyl-L-methionine = 3-methylsulfanyl-L-aspartate(89)-[ribosomal protein uS12]-hydrogen + (sulfur carrier)-H + 5'-deoxyadenosine + L-methionine + A + S-adenosyl-L-homocysteine + 2 H(+). Its function is as follows. Catalyzes the methylthiolation of an aspartic acid residue of ribosomal protein uS12. In Alteromonas mediterranea (strain DSM 17117 / CIP 110805 / LMG 28347 / Deep ecotype), this protein is Ribosomal protein uS12 methylthiotransferase RimO.